A 78-amino-acid chain; its full sequence is Large ribosomal subunit protein bL28 (78 aa).

This sequence belongs to the bacterial ribosomal protein bL28 family.

The sequence is that of Large ribosomal subunit protein bL28 from Klebsiella pneumoniae (strain 342).